Consider the following 195-residue polypeptide: Probable septum site-determining protein MinC (195 aa).

This sequence belongs to the MinC family. Interacts with MinD and FtsZ.

Its function is as follows. Cell division inhibitor that blocks the formation of polar Z ring septums. Rapidly oscillates between the poles of the cell to destabilize FtsZ filaments that have formed before they mature into polar Z rings. Prevents FtsZ polymerization. This chain is Probable septum site-determining protein MinC, found in Helicobacter pylori (strain P12).